We begin with the raw amino-acid sequence, 295 residues long: N-acetylmuramic acid 6-phosphate etherase (295 aa).

The region spanning 54 to 217 (VIAAFRRGGR…STASMVGIGK (164 aa)) is the SIS domain. Residue glutamate 82 is the Proton donor of the active site. Glutamate 113 is an active-site residue.

The protein belongs to the GCKR-like family. MurNAc-6-P etherase subfamily. Homodimer.

The catalysed reaction is N-acetyl-D-muramate 6-phosphate + H2O = N-acetyl-D-glucosamine 6-phosphate + (R)-lactate. Its pathway is amino-sugar metabolism; N-acetylmuramate degradation. Functionally, specifically catalyzes the cleavage of the D-lactyl ether substituent of MurNAc 6-phosphate, producing GlcNAc 6-phosphate and D-lactate. In Geobacillus thermodenitrificans (strain NG80-2), this protein is N-acetylmuramic acid 6-phosphate etherase.